A 160-amino-acid chain; its full sequence is Ribosomal RNA large subunit methyltransferase H (160 aa).

S-adenosyl-L-methionine contacts are provided by L76 and G108.

It belongs to the RNA methyltransferase RlmH family. As to quaternary structure, homodimer.

Its subcellular location is the cytoplasm. It catalyses the reaction pseudouridine(1915) in 23S rRNA + S-adenosyl-L-methionine = N(3)-methylpseudouridine(1915) in 23S rRNA + S-adenosyl-L-homocysteine + H(+). Its function is as follows. Specifically methylates the pseudouridine at position 1915 (m3Psi1915) in 23S rRNA. The chain is Ribosomal RNA large subunit methyltransferase H from Rhodopseudomonas palustris (strain TIE-1).